We begin with the raw amino-acid sequence, 188 residues long: Small ribosomal subunit protein uS7 (188 aa).

This sequence belongs to the universal ribosomal protein uS7 family. As to quaternary structure, part of the 30S ribosomal subunit.

Its function is as follows. One of the primary rRNA binding proteins, it binds directly to 16S rRNA where it nucleates assembly of the head domain of the 30S subunit. Is located at the subunit interface close to the decoding center. The chain is Small ribosomal subunit protein uS7 from Methanococcus aeolicus (strain ATCC BAA-1280 / DSM 17508 / OCM 812 / Nankai-3).